Here is a 352-residue protein sequence, read N- to C-terminus: Uroporphyrinogen decarboxylase (352 aa).

Substrate-binding positions include 26 to 30, F45, D76, Y153, S208, and H323; that span reads RQAGR.

This sequence belongs to the uroporphyrinogen decarboxylase family. In terms of assembly, homodimer.

The protein resides in the cytoplasm. The catalysed reaction is uroporphyrinogen III + 4 H(+) = coproporphyrinogen III + 4 CO2. It participates in porphyrin-containing compound metabolism; protoporphyrin-IX biosynthesis; coproporphyrinogen-III from 5-aminolevulinate: step 4/4. Catalyzes the decarboxylation of four acetate groups of uroporphyrinogen-III to yield coproporphyrinogen-III. The polypeptide is Uroporphyrinogen decarboxylase (Parasynechococcus marenigrum (strain WH8102)).